A 789-amino-acid chain; its full sequence is Fibrinogen alpha chain (789 aa).

An N-terminal signal peptide occupies residues 1–19 (MLSLRVTCLILSVASTVWT). A Phosphoserine modification is found at Ser46. Residues 69 to 554 (CRMKGLIDEA…GRARARPTRD (486 aa)) adopt a coiled-coil conformation. Composition is skewed to basic and acidic residues over residues 263–287 (ERPG…RGDF) and 384–396 (KGDK…KEKV). The disordered stretch occupies residues 263–420 (ERPGKDGGSR…TITKTVTGPD (158 aa)). The segment covering 397–416 (TSSGTSTTHRSCSKTITKTV) has biased composition (polar residues). Cys408 and Cys438 are oxidised to a cystine. At Ser447 the chain carries Phosphoserine. At Pro504 the chain carries 4-hydroxyproline; by P4HA1. The span at 526-541 (ADEAGSEAHREGETRN) shows a compositional bias: basic and acidic residues. A disordered region spans residues 526-555 (ADEAGSEAHREGETRNTKRGRARARPTRDC). The Fibrinogen C-terminal domain occupies 546–787 (RARARPTRDC…AVRMKIRPLV (242 aa)). Asn609 is a glycosylation site (N-linked (GlcNAc...) asparagine). 4 residues coordinate Ca(2+): Asp714, Asp716, Trp718, and Glu720. Residues Cys722 and Cys735 are joined by a disulfide bond.

As to quaternary structure, heterohexamer; disulfide linked. Contains 2 sets of 3 non-identical chains (alpha, beta and gamma). The 2 heterotrimers are in head to head conformation with the N-termini in a small central domain. Post-translationally, conversion of fibrinogen to fibrin is triggered by thrombin, which cleaves fibrinopeptides A and B from alpha and beta chains, and thus exposes the N-terminal polymerization sites responsible for the formation of the soft clot. The soft clot is converted into the hard clot by factor XIIIA which catalyzes the epsilon-(gamma-glutamyl)lysine cross-linking between gamma chains (stronger) and between alpha chains (weaker) of different monomers. Forms F13A-mediated cross-links between a glutamine and the epsilon-amino group of a lysine residue, forming fibronectin-fibrinogen heteropolymers. In terms of processing, phosphorylated by FAM20C in the extracellular medium. In terms of tissue distribution, expressed in liver.

It localises to the secreted. Functionally, cleaved by the protease thrombin to yield monomers which, together with fibrinogen beta (FGB) and fibrinogen gamma (FGG), polymerize to form an insoluble fibrin matrix. Fibrin has a major function in hemostasis as one of the primary components of blood clots. In addition, functions during the early stages of wound repair to stabilize the lesion and guide cell migration during re-epithelialization. Was originally thought to be essential for platelet aggregation, based on in vitro studies using anticoagulated blood. However, subsequent studies have shown that it is not absolutely required for thrombus formation in vivo. Enhances expression of SELP in activated platelets via an ITGB3-dependent pathway. Maternal fibrinogen is essential for successful pregnancy. Fibrin deposition is also associated with infection, where it protects against IFNG-mediated hemorrhage. May also facilitate the immune response via both innate and T-cell mediated pathways. The polypeptide is Fibrinogen alpha chain (Mus musculus (Mouse)).